The sequence spans 1085 residues: Voltage-dependent calcium channel subunit alpha-2/delta-3 (1085 aa).

An N-terminal signal peptide occupies residues 1 to 33; that stretch reads MAGPGSLCCASRGASALLATALLYAALGDVVRS. At 34–1062 the chain is on the extracellular side; it reads EQQIPLSVVK…HPEENARECG (1029 aa). N-linked (GlcNAc...) asparagine glycosylation occurs at Asn-166. A VWFA domain is found at 256–438; the sequence is DVVILVDVSG…ENVMEYLHVL (183 aa). A divalent metal cation contacts are provided by Asp-262, Ser-264, and Ser-266. An MIDAS-like motif motif is present at residues 262–266; that stretch reads DVSGS. A glycan (N-linked (GlcNAc...) asparagine) is linked at Asn-309. Cys-412 and Cys-1049 form a disulfide bridge. Residues 452–543 enclose the Cache domain; the sequence is WTEAYIDSTL…RPLYEEGKKR (92 aa). N-linked (GlcNAc...) asparagine glycans are attached at residues Asn-547 and Asn-626. Tyr-918 carries the post-translational modification Phosphotyrosine. Residues 1063–1083 traverse the membrane as a helical segment; sequence GASSLQAQVALLLLPLVSSLF. Residues 1084–1085 lie on the Cytoplasmic side of the membrane; sequence SR.

The protein belongs to the calcium channel subunit alpha-2/delta family. Dimer formed of alpha-2-2 and delta-2 chains; disulfide-linked. Voltage-dependent calcium channels are multisubunit complexes, consisting of alpha-1 (CACNA1), alpha-2 (CACNA2D), beta (CACNB) and delta (CACNA2D) subunits in a 1:1:1:1 ratio. N-glycosylated. In terms of processing, may be proteolytically processed into subunits alpha-2-3 and delta-3 that are disulfide-linked. It is however unclear whether such cleavage really takes place in vivo and has a functional role. As to expression, in heart, it is expressed in atrium but not in ventricle.

It localises to the membrane. Functionally, the alpha-2/delta subunit of voltage-dependent calcium channels regulates calcium current density and activation/inactivation kinetics of the calcium channel. Acts as a regulatory subunit for P/Q-type calcium channel (CACNA1A), N-type (CACNA1B), L-type (CACNA1C OR CACNA1D) but not T-type (CACNA1G). The sequence is that of Voltage-dependent calcium channel subunit alpha-2/delta-3 (Cacna2d3) from Rattus norvegicus (Rat).